A 622-amino-acid chain; its full sequence is Dynein axonemal assembly factor 1 (622 aa).

Residues 1-80 are disordered; it reads MHPEVSEPQA…ARNDRDDRGP (80 aa). A compositionally biased stretch (basic and acidic residues) spans 22 to 42; it reads AGDHGRAGPGVRKEEINETKE. Residues 48–59 are compositionally biased toward low complexity; the sequence is STTSCQSQKQQS. Over residues 62 to 80 the composition is skewed to basic and acidic residues; the sequence is SRLDCRSGYARNDRDDRGP. LRR repeat units lie at residues 101–123, 124–145, 146–167, 168–189, 190–211, and 215–236; these read ALND…EEYT, GLRC…QAQS, ELRC…EPLQ, KLDA…SCLP, VLNT…QHLR, and RLCV…SVLE. Residues 249–288 form the LRRCT domain; that stretch reads NPVTKHIPNYRRTVTVRLKQLTYLDDRPVFPKDRACAEAW. A compositionally biased stretch (basic and acidic residues) spans 326–336; it reads EERKKARDKGE. Positions 326–360 are disordered; that stretch reads EERKKARDKGETPLPDSEESSSTSPEAQDKPPLGE. Residues 337–351 are compositionally biased toward low complexity; that stretch reads TPLPDSEESSSTSPE. Phosphoserine occurs at positions 349, 464, and 487. Disordered regions lie at residues 481–503 and 540–622; these read SSLS…EHTP and LETQ…FGLD. Polar residues predominate over residues 540-550; it reads LETQGQVFSTT.

This sequence belongs to the DNAAF1 family.

It localises to the cell projection. The protein resides in the cilium. Functionally, cilium-specific protein required for the stability of the ciliary architecture. Plays a role in cytoplasmic preassembly of dynein arms. Involved in regulation of microtubule-based cilia and actin-based brush border microvilli. The chain is Dynein axonemal assembly factor 1 (Dnaaf1) from Peromyscus leucopus (White-footed mouse).